A 667-amino-acid chain; its full sequence is DNA ligase (667 aa).

Residues 32–36 (DSEYD), 81–82 (SL), and Glu-110 each bind NAD(+). Lys-112 (N6-AMP-lysine intermediate) is an active-site residue. NAD(+)-binding residues include Arg-133, Glu-167, Lys-283, and Lys-307. The Zn(2+) site is built by Cys-401, Cys-404, Cys-419, and Cys-424. The 82-residue stretch at 586–667 (EGHPEFSGKT…FVDKQNELNS (82 aa)) folds into the BRCT domain.

It belongs to the NAD-dependent DNA ligase family. LigA subfamily. Mg(2+) is required as a cofactor. The cofactor is Mn(2+).

The catalysed reaction is NAD(+) + (deoxyribonucleotide)n-3'-hydroxyl + 5'-phospho-(deoxyribonucleotide)m = (deoxyribonucleotide)n+m + AMP + beta-nicotinamide D-nucleotide.. In terms of biological role, DNA ligase that catalyzes the formation of phosphodiester linkages between 5'-phosphoryl and 3'-hydroxyl groups in double-stranded DNA using NAD as a coenzyme and as the energy source for the reaction. It is essential for DNA replication and repair of damaged DNA. This is DNA ligase from Staphylococcus aureus (strain Mu3 / ATCC 700698).